Reading from the N-terminus, the 357-residue chain is N-acetyl-gamma-glutamyl-phosphate reductase (357 aa).

The active site involves Cys160.

It belongs to the NAGSA dehydrogenase family. Type 1 subfamily.

It localises to the cytoplasm. It catalyses the reaction N-acetyl-L-glutamate 5-semialdehyde + phosphate + NADP(+) = N-acetyl-L-glutamyl 5-phosphate + NADPH + H(+). The protein operates within amino-acid biosynthesis; L-arginine biosynthesis; N(2)-acetyl-L-ornithine from L-glutamate: step 3/4. Its function is as follows. Catalyzes the NADPH-dependent reduction of N-acetyl-5-glutamyl phosphate to yield N-acetyl-L-glutamate 5-semialdehyde. The sequence is that of N-acetyl-gamma-glutamyl-phosphate reductase from Prochlorococcus marinus (strain MIT 9313).